Consider the following 404-residue polypeptide: Homocysteine-responsive endoplasmic reticulum-resident ubiquitin-like domain member 2 protein (404 aa).

One can recognise a Ubiquitin-like domain in the interval Val-10–Arg-89. Positions Cys-86 to Ala-153 are disordered. Low complexity-rich tracts occupy residues Ser-88–Ser-97 and Ser-109–Ser-126. Residues Gln-127 to Ala-153 show a composition bias toward polar residues. The chain crosses the membrane as a helical span at residues Phe-301 to Phe-321.

Its subcellular location is the membrane. Functionally, could be involved in the unfolded protein response (UPR) pathway. The chain is Homocysteine-responsive endoplasmic reticulum-resident ubiquitin-like domain member 2 protein (Herpud2) from Mus musculus (Mouse).